A 70-amino-acid chain; its full sequence is Eglin C (70 aa).

Belongs to the protease inhibitor I13 (potato type I serine protease inhibitor) family.

In terms of biological role, inhibits both elastase and cathepsin G. The protein is Eglin C of Hirudo medicinalis (Medicinal leech).